Here is a 551-residue protein sequence, read N- to C-terminus: Tetrachloroethene reductive dehalogenase (551 aa).

A signal peptide (tat-type signal) is located at residues 1–39 (MGEINRRNFLKASMLGAAAAAVASASVVKGVVSPLVADA). Residues 411–440 (PRKFGVREFCRLCKKCADACPAQAISHEKD) enclose the 4Fe-4S ferredoxin-type 1 domain. 8 residues coordinate [4Fe-4S] cluster: Cys420, Cys423, Cys426, Cys430, Cys467, Cys478, Cys481, and Cys485. Residues 478 to 496 (CSNCVAVCSWNKVETWNHD) form the 4Fe-4S ferredoxin-type 2 domain.

Belongs to the PceA family. Requires [4Fe-4S] cluster as cofactor. Corrinoid is required as a cofactor. In terms of processing, predicted to be exported by the Tat system. The position of the signal peptide cleavage has been experimentally proven.

Its subcellular location is the cell membrane. The enzyme catalyses trichloroethene + chloride + A + H(+) = tetrachloroethene + AH2. It carries out the reaction trichloroethene + AH2 = (Z)-1,2-dichloroethene + chloride + A + H(+). Catalyzes the reductive dechlorination of tetrachloroethene (PCE) to trichloroethene (TCE) and of trichloroethene to cis-1,2-dichloroethene (DCE). Reduced methyl viologen can act as the artificial electron donor. The sequence is that of Tetrachloroethene reductive dehalogenase from Desulfitobacterium hafniense (Desulfitobacterium frappieri).